The sequence spans 485 residues: MKHAIRHIHFVGIGGSGMSGIAEVLFNLGYRITGSDLADSATLRRLAGLGIGTFVGHAAAHIDGADAVVTSTAVQSDNPEVLAAREKRIPVVPRALMLAELMRLKQGIAIAGTHGKTTTTSLVASVLDAAGLDPTFVIGGRLNSAGANAQLGSGDYIVVEADESDASFLNLLPVMAVVTNIDADHMETYGHDFAKLKKAFVDFLHRMPFYGVAILCTDDPAVRDIVAEVTCPVTSYGFGEEAQVRAIDVRAVGGQMHFTAQRRNGVTLPDLPIVLNLPGEHNVRNALSVIAVAVELGIPDEAVQRGLAGFKGVGRRFQSYGEVAAQGEPAGSFTVIDDYGHHPVEMAATIAAARGAFPGRRLVLAFQPHRYTRTRDCFEDFVKVIGNADAVLLGEVYAAGEPPIVAADGRTLARALRVAGKVEPVFVDDIGAMPQAILDNARAGDVVLCMGAGSIGAVPGKVVEIAAAASLPQQTTRTRRKGEAS.

112–118 serves as a coordination point for ATP; sequence GTHGKTT.

It belongs to the MurCDEF family.

It is found in the cytoplasm. The catalysed reaction is UDP-N-acetyl-alpha-D-muramate + L-alanine + ATP = UDP-N-acetyl-alpha-D-muramoyl-L-alanine + ADP + phosphate + H(+). The protein operates within cell wall biogenesis; peptidoglycan biosynthesis. Its function is as follows. Cell wall formation. This Variovorax paradoxus (strain S110) protein is UDP-N-acetylmuramate--L-alanine ligase.